The primary structure comprises 504 residues: ATP synthase subunit alpha (504 aa).

169-176 (GDRQIGKT) is a binding site for ATP.

It belongs to the ATPase alpha/beta chains family. As to quaternary structure, F-type ATPases have 2 components, CF(1) - the catalytic core - and CF(0) - the membrane proton channel. CF(1) has five subunits: alpha(3), beta(3), gamma(1), delta(1), epsilon(1). CF(0) has three main subunits: a(1), b(2) and c(9-12). The alpha and beta chains form an alternating ring which encloses part of the gamma chain. CF(1) is attached to CF(0) by a central stalk formed by the gamma and epsilon chains, while a peripheral stalk is formed by the delta and b chains.

Its subcellular location is the cell membrane. It catalyses the reaction ATP + H2O + 4 H(+)(in) = ADP + phosphate + 5 H(+)(out). Its function is as follows. Produces ATP from ADP in the presence of a proton gradient across the membrane. The alpha chain is a regulatory subunit. This chain is ATP synthase subunit alpha, found in Syntrophomonas wolfei subsp. wolfei (strain DSM 2245B / Goettingen).